The following is a 339-amino-acid chain: MVREEVAGSTQTLQWKCVESRVDSKRLYYGRFILSPLRKGQADTVGIALRRALLGEIEGTCITRAKFWSVPHEYSTIAGIEESVQEILLNLKEIVLRSNLYGVRDASICVKGPRYITAQDIILPPSVEIVDTAQPIANLTEPIDFCIDLQIKRDRGYQTELRKNYQDGSYPIDAVSMPVRNVNYSIFSCGNGNEKHEILFLEIWTNGSLTPKEALYEASRNLIDLFLPFLHAEEEGTSFEENKNRFTPPLFTFQKRLTNLKKNKKGIPLNCIFIDQLELTSRTYNCLKRANIHTLLDLLSKTEEDLLRIDSFRMEDRKHIWDTLEKHLPIDLLKNKLSF.

Residues 1–233 form an alpha N-terminal domain (alpha-NTD) region; sequence MVREEVAGST…DLFLPFLHAE (233 aa). Positions 264–339 are alpha C-terminal domain (alpha-CTD); sequence KKGIPLNCIF…IDLLKNKLSF (76 aa).

It belongs to the RNA polymerase alpha chain family. As to quaternary structure, in plastids the minimal PEP RNA polymerase catalytic core is composed of four subunits: alpha, beta, beta', and beta''. When a (nuclear-encoded) sigma factor is associated with the core the holoenzyme is formed, which can initiate transcription.

The protein localises to the plastid. Its subcellular location is the chloroplast. The catalysed reaction is RNA(n) + a ribonucleoside 5'-triphosphate = RNA(n+1) + diphosphate. DNA-dependent RNA polymerase catalyzes the transcription of DNA into RNA using the four ribonucleoside triphosphates as substrates. The chain is DNA-directed RNA polymerase subunit alpha from Festucopsis serpentini.